The sequence spans 20 residues: Fibrinolytic zinc metalloproteinase (20 aa).

One can recognise a Peptidase M12B domain in the interval arginine 7 to asparagine 20.

It depends on Zn(2+) as a cofactor.

It localises to the secreted. Functionally, hydrolyzes alpha and beta chains of human fibrinogen and human fibrin. No activity against the gamma chain of human fibrinogen, human thrombin, bovine serum albumin, ovalbumin and hemoglobin. Has anticoagulant activity on human plasma and protects mice against death due from experimentally induced platelet thromboembolism with an ED(50) of 40 ug/kg. The polypeptide is Fibrinolytic zinc metalloproteinase (Ganoderma lucidum (Ling zhi medicinal fungus)).